The sequence spans 290 residues: MSNSYLAFPKFDPVIFSIGPVSLHWYGLMYLVGFVFAMWLAVRRANKPGSGWTKEEVENLLYAGFLGVFVGGRVGYVLFYNLPLFLDNPLYLFKVWDGGMSFHGGLIGVICVMLWFARRTKRHFFQVADFIAPLIPFGLGAGRLGNFINGELWGRVTTDTPWAMLFPTSRGEDIAIVAADPAKWQAIFNQYGVLPRHPSQLYEMILEGVVLFIILNLFIRKPRPMGSVSGLFLIGYGAFRIIVECFRQPDAQLGLFDGVISMGQILSVPMILAGIIMMIWAYRRPAQQLS.

7 consecutive transmembrane segments (helical) span residues 21–41, 60–80, 96–116, 124–144, 199–219, 226–246, and 259–279; these read VSLH…MWLA, LLYA…VLFY, WDGG…MLWF, FFQV…AGRL, SQLY…NLFI, GSVS…VECF, and VISM…IMMI. An a 1,2-diacyl-sn-glycero-3-phospho-(1'-sn-glycerol)-binding site is contributed by R143.

The protein belongs to the Lgt family.

It localises to the cell inner membrane. The enzyme catalyses L-cysteinyl-[prolipoprotein] + a 1,2-diacyl-sn-glycero-3-phospho-(1'-sn-glycerol) = an S-1,2-diacyl-sn-glyceryl-L-cysteinyl-[prolipoprotein] + sn-glycerol 1-phosphate + H(+). Its pathway is protein modification; lipoprotein biosynthesis (diacylglyceryl transfer). In terms of biological role, catalyzes the transfer of the diacylglyceryl group from phosphatidylglycerol to the sulfhydryl group of the N-terminal cysteine of a prolipoprotein, the first step in the formation of mature lipoproteins. This Yersinia enterocolitica serotype O:8 / biotype 1B (strain NCTC 13174 / 8081) protein is Phosphatidylglycerol--prolipoprotein diacylglyceryl transferase.